A 599-amino-acid polypeptide reads, in one-letter code: PR domain zinc finger protein 5 (599 aa).

Positions 8–124 (DRFALKSSRV…TDTELLIGYL (117 aa)) constitute an SET domain. C2H2-type zinc fingers lie at residues 167–190 (FACP…QSLH), 199–221 (FKCE…FEQH), 231–256 (FVCK…ENVH), 264–286 (LICS…RKIH), 289–311 (FDCQ…MITH), 317–339 (YNCE…KVIH), 345–367 (YQCK…KKTH), 373–395 (FQCD…LLIH), 401–424 (FKCH…QVVH), 430–452 (YRCE…KKTH), 458–480 (KVCP…IRSH), and 486–508 (YQCP…IRTH). The C2H2-type 13; degenerate zinc finger occupies 514 to 536 (YQCSECSKAFSQKRGLDEHKRTH). 2 C2H2-type zinc fingers span residues 542–564 (FQCD…KMTH) and 571–594 (AECH…DNIH).

It belongs to the class V-like SAM-binding methyltransferase superfamily. In terms of assembly, interacts with EHMT2/G9A, GFI1 and HDAC1.

It is found in the nucleus. Its function is as follows. Sequence-specific DNA-binding transcription factor. Represses transcription at least in part by recruitment of the histone methyltransferase EHMT2/G9A and histone deacetylases such as HDAC1. Regulates hematopoiesis-associated protein-coding and microRNA (miRNA) genes. May regulate the expression of proteins involved in extracellular matrix development and maintenance, connective tissue components and molecules regulating cell migration and adhesion. May cause G2/M arrest and apoptosis in cancer cells. The sequence is that of PR domain zinc finger protein 5 (Prdm5) from Mus musculus (Mouse).